A 396-amino-acid chain; its full sequence is Probable mannan endo-1,4-beta-mannosidase A-2 (396 aa).

The N-terminal stretch at 1-21 is a signal peptide; that stretch reads MKVPRLLLALGGLASIHIASA. Residue tryptophan 99 participates in substrate binding. An N-linked (GlcNAc...) asparagine glycan is attached at asparagine 120. A substrate-binding site is contributed by asparagine 212. Residue glutamate 213 is the Proton donor of the active site. Residue asparagine 270 is glycosylated (N-linked (GlcNAc...) asparagine). Residue tyrosine 288 coordinates substrate. The Nucleophile role is filled by glutamate 321. Tryptophan 351 contacts substrate.

The protein belongs to the glycosyl hydrolase 5 (cellulase A) family.

It is found in the secreted. The enzyme catalyses Random hydrolysis of (1-&gt;4)-beta-D-mannosidic linkages in mannans, galactomannans and glucomannans.. Endo-1,4-mannanase, a crucial enzyme for depolymerization of seed galactomannans and wood galactoglucomannans. The polypeptide is Probable mannan endo-1,4-beta-mannosidase A-2 (manA-2) (Aspergillus terreus (strain NIH 2624 / FGSC A1156)).